We begin with the raw amino-acid sequence, 254 residues long: MRKVFLAGNWKMHYTSVEAADVAKQIVDGVYNINNNVVVMVTPTFTSLCKVCRVTKGTNVLLGAQNMSYENSGARTSEIAPSMLLEFGVDYVILGHSECRTYLGENDEIINKKVLTGLKHPFKYLILCVGETLEEREKGKTLDVVLNQVRNGLASVYESDLQRIILAYEPVWAIGTGKTATKEEAQEVHKAIRLEIQSLYSKSAADNIIIQYGGSVNVDNVEGLMGENDIDGALIGGSSLKADSFLKIINKISK.

Residue 9–11 (NWK) participates in substrate binding. The active-site Electrophile is H96. E169 serves as the catalytic Proton acceptor. Residues G175, S215, and 236 to 237 (GG) each bind substrate.

The protein belongs to the triosephosphate isomerase family. Homodimer.

It localises to the cytoplasm. The catalysed reaction is D-glyceraldehyde 3-phosphate = dihydroxyacetone phosphate. Its pathway is carbohydrate biosynthesis; gluconeogenesis. The protein operates within carbohydrate degradation; glycolysis; D-glyceraldehyde 3-phosphate from glycerone phosphate: step 1/1. In terms of biological role, involved in the gluconeogenesis. Catalyzes stereospecifically the conversion of dihydroxyacetone phosphate (DHAP) to D-glyceraldehyde-3-phosphate (G3P). The sequence is that of Triosephosphate isomerase from Borrelia recurrentis (strain A1).